The chain runs to 402 residues: Succinyl-CoA--D-citramalate CoA-transferase (402 aa).

The Nucleophile role is filled by D174.

Belongs to the CoA-transferase III family. As to quaternary structure, homodimer.

It catalyses the reaction (3R)-citramalate + succinyl-CoA = (3R)-citramalyl-CoA + succinate. The enzyme catalyses (R)-malate + succinyl-CoA = (R)-malyl-CoA + succinate. Functionally, involved in the 3-hydroxypropionate cycle used for autotrophic carbon dioxide fixation, and in the glyoxylate assimilation cycle used to regenerate acetyl-CoA and produce pyruvate as universal precursor for biosynthesis. Catalyzes the transfer of CoA moiety from succinyl-CoA to D-citramalate to yield citramalyl-CoA. The protein is Succinyl-CoA--D-citramalate CoA-transferase of Chloroflexus aurantiacus (strain ATCC 29366 / DSM 635 / J-10-fl).